Here is a 432-residue protein sequence, read N- to C-terminus: D-amino acid dehydrogenase (432 aa).

An FAD-binding site is contributed by 3–17 (VLVLGSGVVGTASAY).

It belongs to the DadA oxidoreductase family. FAD serves as cofactor.

The catalysed reaction is a D-alpha-amino acid + A + H2O = a 2-oxocarboxylate + AH2 + NH4(+). Its pathway is amino-acid degradation; D-alanine degradation; NH(3) and pyruvate from D-alanine: step 1/1. In terms of biological role, oxidative deamination of D-amino acids. The chain is D-amino acid dehydrogenase from Stutzerimonas stutzeri (strain A1501) (Pseudomonas stutzeri).